Here is a 621-residue protein sequence, read N- to C-terminus: Bifunctional protein GlmU (621 aa).

Residues 1 to 229 are pyrophosphorylase; it reads MAERDLAVAI…AREIVGINDR (229 aa). UDP-N-acetyl-alpha-D-glucosamine is bound by residues 11-14, K25, Q76, and 81-82; these read LAAG and GT. D106 contributes to the Mg(2+) binding site. G143, E158, N173, and N227 together coordinate UDP-N-acetyl-alpha-D-glucosamine. N227 provides a ligand contact to Mg(2+). Residues 230–250 are linker; sequence RQLAQAYQILQDRLKEAWMEA. Residues 251–621 form an N-acetyltransferase region; it reads GVTFVDPDSV…TGVGIPSCPP (371 aa). The UDP-N-acetyl-alpha-D-glucosamine site is built by R332 and K350. H362 acts as the Proton acceptor in catalysis. The UDP-N-acetyl-alpha-D-glucosamine site is built by Y365 and N376. Acetyl-CoA is bound by residues A379, 385 to 386, A422, and R441; that span reads NY. The disordered stretch occupies residues 601 to 621; the sequence is ATPPSPQRADGTGVGIPSCPP.

It in the N-terminal section; belongs to the N-acetylglucosamine-1-phosphate uridyltransferase family. This sequence in the C-terminal section; belongs to the transferase hexapeptide repeat family. Homotrimer. Mg(2+) serves as cofactor.

Its subcellular location is the cytoplasm. The catalysed reaction is alpha-D-glucosamine 1-phosphate + acetyl-CoA = N-acetyl-alpha-D-glucosamine 1-phosphate + CoA + H(+). It catalyses the reaction N-acetyl-alpha-D-glucosamine 1-phosphate + UTP + H(+) = UDP-N-acetyl-alpha-D-glucosamine + diphosphate. Its pathway is nucleotide-sugar biosynthesis; UDP-N-acetyl-alpha-D-glucosamine biosynthesis; N-acetyl-alpha-D-glucosamine 1-phosphate from alpha-D-glucosamine 6-phosphate (route II): step 2/2. The protein operates within nucleotide-sugar biosynthesis; UDP-N-acetyl-alpha-D-glucosamine biosynthesis; UDP-N-acetyl-alpha-D-glucosamine from N-acetyl-alpha-D-glucosamine 1-phosphate: step 1/1. It functions in the pathway bacterial outer membrane biogenesis; LPS lipid A biosynthesis. Catalyzes the last two sequential reactions in the de novo biosynthetic pathway for UDP-N-acetylglucosamine (UDP-GlcNAc). The C-terminal domain catalyzes the transfer of acetyl group from acetyl coenzyme A to glucosamine-1-phosphate (GlcN-1-P) to produce N-acetylglucosamine-1-phosphate (GlcNAc-1-P), which is converted into UDP-GlcNAc by the transfer of uridine 5-monophosphate (from uridine 5-triphosphate), a reaction catalyzed by the N-terminal domain. The chain is Bifunctional protein GlmU from Synechococcus sp. (strain JA-3-3Ab) (Cyanobacteria bacterium Yellowstone A-Prime).